A 365-amino-acid polypeptide reads, in one-letter code: DNA replication and repair protein RecF (365 aa).

30–37 provides a ligand contact to ATP; that stretch reads GQNGSGKT.

It belongs to the RecF family.

It is found in the cytoplasm. Its function is as follows. The RecF protein is involved in DNA metabolism; it is required for DNA replication and normal SOS inducibility. RecF binds preferentially to single-stranded, linear DNA. It also seems to bind ATP. The chain is DNA replication and repair protein RecF from Shewanella woodyi (strain ATCC 51908 / MS32).